Here is a 1118-residue protein sequence, read N- to C-terminus: Receptor-type guanylate cyclase gcy-2 (1118 aa).

A signal peptide spans 1-21 (MVSSILKFVILIHSTFHSTFA). The Extracellular portion of the chain corresponds to 22-494 (QNLPDTTVAP…FCPISFWEQY (473 aa)). N-linked (GlcNAc...) asparagine glycosylation is found at asparagine 222, asparagine 351, asparagine 361, asparagine 387, asparagine 420, and asparagine 452. The chain crosses the membrane as a helical span at residues 495–515 (MILAIVSISVIVLMVIIMIIG). At 516-1118 (CLCVISAKHA…FKMDTLKVAN (603 aa)) the chain is on the cytoplasmic side. The 318-residue stretch at 558 to 875 (LQSAPSISTG…EGFDSVTVFF (318 aa)) folds into the Protein kinase domain. The Guanylate cyclase domain maps to 872 to 1002 (TVFFSDVVKF…DTVNTASRME (131 aa)). Residues 1076–1103 (WITPPAPKPEIRSVSSHGSRPPSVYDPL) are disordered.

It belongs to the adenylyl cyclase class-4/guanylyl cyclase family. In terms of tissue distribution, expressed bilaterally in AWA and ASI sensory neurons and in RIA and PVT interneurons.

The protein localises to the cell membrane. It carries out the reaction GTP = 3',5'-cyclic GMP + diphosphate. Functionally, guanylate cyclase involved in the production of the second messenger cGMP. This is Receptor-type guanylate cyclase gcy-2 from Caenorhabditis elegans.